A 782-amino-acid chain; its full sequence is E3 ubiquitin-protein ligase SopA (782 aa).

Residues 140–170 are disordered; it reads SANNRPTVSEGRTPPVSPSLSLQATSSPSSP. The span at 157 to 170 shows a compositional bias: low complexity; that stretch reads PSLSLQATSSPSSP. Residue Cys-753 is the Glycyl thioester intermediate of the active site.

This sequence belongs to the SopA E3 ligase family. In terms of processing, ubiquitinated in the presence of host E1 ubiquitin-activating enzyme, E2 ubiquitin-conjugating enzyme and ubiquitin.

Its subcellular location is the secreted. The protein localises to the host cell. It carries out the reaction S-ubiquitinyl-[E2 ubiquitin-conjugating enzyme]-L-cysteine + [acceptor protein]-L-lysine = [E2 ubiquitin-conjugating enzyme]-L-cysteine + N(6)-ubiquitinyl-[acceptor protein]-L-lysine.. Effector proteins function to alter host cell physiology and promote bacterial survival in host tissues. This protein is an E3 ubiquitin ligase that interferes with host's ubiquitination pathway. The protein is E3 ubiquitin-protein ligase SopA (sopA) of Salmonella agona (strain SL483).